The chain runs to 302 residues: UPF0761 membrane protein Tola_0461 (302 aa).

The next 6 helical transmembrane spans lie at 51–71 (YVSL…LSWL), 111–131 (TTSI…AAID), 150–170 (ITMY…SLLL), 188–208 (LGGG…ILLL), 222–242 (ALLG…GFGY), and 256–276 (ALAG…VVLL).

It belongs to the UPF0761 family.

Its subcellular location is the cell inner membrane. The protein is UPF0761 membrane protein Tola_0461 of Tolumonas auensis (strain DSM 9187 / NBRC 110442 / TA 4).